Consider the following 101-residue polypeptide: Large ribosomal subunit protein uL23 (101 aa).

This sequence belongs to the universal ribosomal protein uL23 family. As to quaternary structure, part of the 50S ribosomal subunit. Contacts protein L29, and trigger factor when it is bound to the ribosome.

Its function is as follows. One of the early assembly proteins it binds 23S rRNA. One of the proteins that surrounds the polypeptide exit tunnel on the outside of the ribosome. Forms the main docking site for trigger factor binding to the ribosome. This Mannheimia succiniciproducens (strain KCTC 0769BP / MBEL55E) protein is Large ribosomal subunit protein uL23.